Reading from the N-terminus, the 434-residue chain is Gamma-glutamyl phosphate reductase (434 aa).

The segment covering 1 to 11 has biased composition (polar residues); that stretch reads MTNSNEAQENA. The segment at 1 to 26 is disordered; it reads MTNSNEAQENALSPERQAERDEVLAK. Positions 16–25 are enriched in basic and acidic residues; sequence RQAERDEVLA.

It belongs to the gamma-glutamyl phosphate reductase family.

The protein localises to the cytoplasm. It carries out the reaction L-glutamate 5-semialdehyde + phosphate + NADP(+) = L-glutamyl 5-phosphate + NADPH + H(+). It functions in the pathway amino-acid biosynthesis; L-proline biosynthesis; L-glutamate 5-semialdehyde from L-glutamate: step 2/2. Its function is as follows. Catalyzes the NADPH-dependent reduction of L-glutamate 5-phosphate into L-glutamate 5-semialdehyde and phosphate. The product spontaneously undergoes cyclization to form 1-pyrroline-5-carboxylate. The protein is Gamma-glutamyl phosphate reductase of Corynebacterium jeikeium (strain K411).